Here is a 340-residue protein sequence, read N- to C-terminus: UDP-glucose 4-epimerase (340 aa).

NAD(+) contacts are provided by residues 16 to 17 (YI), 37 to 42 (IDNNKN), 60 to 61 (DL), 82 to 86 (FAAKT), serine 127, tyrosine 154, lysine 158, and phenylalanine 182. Residues serine 127 and tyrosine 154 each contribute to the substrate site. Tyrosine 154 (proton acceptor) is an active-site residue. Residues asparagine 183, 199 to 200 (TL), 216 to 218 (FLY), arginine 231, and 295 to 298 (RSWD) each bind substrate.

This sequence belongs to the NAD(P)-dependent epimerase/dehydratase family. Homodimer. NAD(+) serves as cofactor.

It carries out the reaction UDP-alpha-D-glucose = UDP-alpha-D-galactose. It functions in the pathway carbohydrate metabolism; galactose metabolism. Its function is as follows. Involved in the metabolism of galactose. Catalyzes the conversion of UDP-galactose (UDP-Gal) to UDP-glucose (UDP-Glc) through a mechanism involving the transient reduction of NAD. The chain is UDP-glucose 4-epimerase (galE) from Mycoplasma genitalium (strain ATCC 33530 / DSM 19775 / NCTC 10195 / G37) (Mycoplasmoides genitalium).